The following is a 414-amino-acid chain: 3-isopropylmalate dehydratase large subunit (414 aa).

Residues Cys295, Cys353, and Cys356 each coordinate [4Fe-4S] cluster.

It belongs to the aconitase/IPM isomerase family. LeuC type 2 subfamily. Heterodimer of LeuC and LeuD. It depends on [4Fe-4S] cluster as a cofactor.

It carries out the reaction (2R,3S)-3-isopropylmalate = (2S)-2-isopropylmalate. It participates in amino-acid biosynthesis; L-leucine biosynthesis; L-leucine from 3-methyl-2-oxobutanoate: step 2/4. Functionally, catalyzes the isomerization between 2-isopropylmalate and 3-isopropylmalate, via the formation of 2-isopropylmaleate. This is 3-isopropylmalate dehydratase large subunit from Pyrobaculum islandicum (strain DSM 4184 / JCM 9189 / GEO3).